The following is a 489-amino-acid chain: MTFRHCVAVDLGASSGRVMLARYDSKHRTLTLREIHRFVNCLQKTDGFDTWDIDSLEKDIRLGLKKVCNEGILIDSIGIDTWGVDYVLLDKQGQRVGLPVSYRDNRTTGIMPQALVQIGKSEIYRRSGIQFLPFNTIYQLRALTKQQPELTAQVAHALLMPDYFSYRLTGEMNWEYTNATTTQLVNINTDDWDDTLLAWTGAKKSWFGRPSHPGNVIGDWICPQGNRIPVVAVASHDTASAVIASPLANKHSAYLSSGTWSLMGFESKMPYTTDEALAANITNEGGAEGRYRVLKNIMGLWLLQRVLKERRITDLPALIAQTEALPACRFLINPNDDRFINPDDMRAEIQAACRETDQPVPVSDAELARCIFDSLALLYADILHELANLRGEKFTQLHIVGGGCQNSLLNQLCADACGIRVMAGPVEASTLGNIGIQLMTLDELNNVDDFRQVVSANYDLTTYIPNPDSEIARHVAQFQPKRQTKELCA.

Residue 13–17 (ASSGR) participates in ATP binding. Cys68 and Cys222 form a disulfide bridge. Substrate-binding positions include Gly83 and 236–238 (HDT). Asp237 acts as the Proton acceptor in catalysis. Thr259 lines the ATP pocket. Asn296 is a binding site for substrate. Gln304 is an ATP binding site. Cys353 and Cys370 are joined by a disulfide. An ATP-binding site is contributed by Gly402. The cysteines at positions 413 and 417 are disulfide-linked.

This sequence belongs to the rhamnulokinase family. It depends on Mg(2+) as a cofactor.

The enzyme catalyses L-rhamnulose + ATP = L-rhamnulose 1-phosphate + ADP + H(+). Its pathway is carbohydrate degradation; L-rhamnose degradation; glycerone phosphate from L-rhamnose: step 2/3. Its function is as follows. Involved in the catabolism of L-rhamnose (6-deoxy-L-mannose). Catalyzes the transfer of the gamma-phosphate group from ATP to the 1-hydroxyl group of L-rhamnulose to yield L-rhamnulose 1-phosphate. This is Rhamnulokinase from Salmonella enteritidis PT4 (strain P125109).